The sequence spans 273 residues: uncharacterized protein (273 aa).

The helical transmembrane segment at 7–27 (LTLGICLVLLIILIVGYVIMT) threads the bilayer.

This sequence belongs to the staphylococcal tandem lipoprotein family.

Its subcellular location is the cell membrane. This is an uncharacterized protein from Staphylococcus aureus (strain MSSA476).